A 378-amino-acid chain; its full sequence is MNNTEYYDRLGVSKDASQDDIKKAYRKMSKKYHPDINKEAGAEQKYKDVQEAYETLSDSQKRAAYDQYGAAGAQGGFGGGAGGFGGFDGGGFGGFEDIFSSFFGGGGSRNPNAPRQGDDLQYRVNLSFEEAVFGVEKEVSYNREATCGTCLGSGAKPGTAPVTCRKCHGSGVMTIDTQTPLGMMRRQVTCDICHGSGKEIKEPCQTCHGTGHEKQAHKVSVKIPAGVETGQQIRLQGQGEAGFNGGPYGDLFVILNVLPSKQFERNGSTIYYSLDISFTQAALGDTVEIPTVHGDVELAIPAGTQTGKTFRLKGKGAPKLRGGGQGDQHVTVNIVTPTKLNDAQREALQAFAEASGEKMLHPKKKGFFDKVKDALEDI.

The J domain occupies 5 to 69 (EYYDRLGVSK…QKRAAYDQYG (65 aa)). The CR-type zinc finger occupies 134–216 (GVEKEVSYNR…CHGTGHEKQA (83 aa)). Zn(2+)-binding residues include Cys-147, Cys-150, Cys-164, Cys-167, Cys-190, Cys-193, Cys-204, and Cys-207. CXXCXGXG motif repeat units lie at residues 147-154 (CGTCLGSG), 164-171 (CRKCHGSG), 190-197 (CDICHGSG), and 204-211 (CQTCHGTG).

Belongs to the DnaJ family. As to quaternary structure, homodimer. The cofactor is Zn(2+).

The protein resides in the cytoplasm. In terms of biological role, participates actively in the response to hyperosmotic and heat shock by preventing the aggregation of stress-denatured proteins and by disaggregating proteins, also in an autonomous, DnaK-independent fashion. Unfolded proteins bind initially to DnaJ; upon interaction with the DnaJ-bound protein, DnaK hydrolyzes its bound ATP, resulting in the formation of a stable complex. GrpE releases ADP from DnaK; ATP binding to DnaK triggers the release of the substrate protein, thus completing the reaction cycle. Several rounds of ATP-dependent interactions between DnaJ, DnaK and GrpE are required for fully efficient folding. Also involved, together with DnaK and GrpE, in the DNA replication of plasmids through activation of initiation proteins. The protein is Chaperone protein DnaJ of Streptococcus pyogenes.